We begin with the raw amino-acid sequence, 390 residues long: Magnesium-protoporphyrin IX monomethyl ester [oxidative] cyclase (390 aa).

Belongs to the AcsF family. Fe cation is required as a cofactor.

It catalyses the reaction Mg-protoporphyrin IX 13-monomethyl ester + 3 NADPH + 3 O2 + 2 H(+) = 3,8-divinyl protochlorophyllide a + 3 NADP(+) + 5 H2O. It participates in porphyrin-containing compound metabolism; chlorophyll biosynthesis (light-independent). Functionally, catalyzes the formation of the isocyclic ring in chlorophyll biosynthesis. Mediates the cyclase reaction, which results in the formation of divinylprotochlorophyllide (Pchlide) characteristic of all chlorophylls from magnesium-protoporphyrin IX 13-monomethyl ester (MgPMME). This is Magnesium-protoporphyrin IX monomethyl ester [oxidative] cyclase from Prochlorococcus marinus (strain MIT 9215).